A 478-amino-acid polypeptide reads, in one-letter code: TFIIA-alpha and beta-like factor (478 aa).

The interval 309 to 427 is disordered; that stretch reads VKQPRNIEEP…SGDDVSEQDV (119 aa). Positions 390-401 are enriched in polar residues; sequence SISNEDSATNSS. A compositionally biased stretch (acidic residues) spans 411–427; that stretch reads VEEDPLNSGDDVSEQDV.

Belongs to the TFIIA subunit 1 family. Testis specific. Detected in adult testis mostly in round and elongating spermatids (at protein level). Detected in testis.

Its subcellular location is the nucleus. Functionally, may function as a testis specific transcription factor. Binds DNA in conjunction with GTF2A2 and TBP (the TATA-binding protein) and together with GTF2A2, allows mRNA transcription. The sequence is that of TFIIA-alpha and beta-like factor (GTF2A1L) from Homo sapiens (Human).